A 318-amino-acid polypeptide reads, in one-letter code: Methionyl-tRNA formyltransferase (318 aa).

112–115 (SLLP) serves as a coordination point for (6S)-5,6,7,8-tetrahydrofolate.

This sequence belongs to the Fmt family.

It carries out the reaction L-methionyl-tRNA(fMet) + (6R)-10-formyltetrahydrofolate = N-formyl-L-methionyl-tRNA(fMet) + (6S)-5,6,7,8-tetrahydrofolate + H(+). Attaches a formyl group to the free amino group of methionyl-tRNA(fMet). The formyl group appears to play a dual role in the initiator identity of N-formylmethionyl-tRNA by promoting its recognition by IF2 and preventing the misappropriation of this tRNA by the elongation apparatus. This is Methionyl-tRNA formyltransferase from Citrifermentans bemidjiense (strain ATCC BAA-1014 / DSM 16622 / JCM 12645 / Bem) (Geobacter bemidjiensis).